The primary structure comprises 111 residues: Putative G antigen family E member 3 (111 aa).

Residues 1–67 (MSEHVRTRSQ…EGAPAVQGPD (67 aa)) form a disordered region. A compositionally biased stretch (polar residues) spans 8-24 (RSQSSERGNDQESSQPV). Residue T97 is modified to Phosphothreonine.

It belongs to the GAGE family.

This Homo sapiens (Human) protein is Putative G antigen family E member 3 (PAGE2B).